We begin with the raw amino-acid sequence, 177 residues long: Flavodoxin (177 aa).

In terms of domain architecture, Flavodoxin-like spans 4-173 (IGIFFGSDTG…RIDSWLEKLK (170 aa)).

Belongs to the flavodoxin family. It depends on FMN as a cofactor.

Functionally, low-potential electron donor to a number of redox enzymes. NifF is the electron donor to nitrogenase. The chain is Flavodoxin (nifF) from Enterobacter agglomerans (Erwinia herbicola).